We begin with the raw amino-acid sequence, 397 residues long: G2/mitotic-specific cyclin-B1 (397 aa).

Positions 1-17 (MALRVTRNTRLASSENQ) are enriched in polar residues. Residues 1 to 30 (MALRVTRNTRLASSENQGALPGKAAVANKP) form a disordered region.

It belongs to the cyclin family. Cyclin AB subfamily. As to quaternary structure, interacts with the CDK1 protein kinase to form a serine/threonine kinase holoenzyme complex also known as maturation promoting factor (MPF). The cyclin subunit imparts substrate specificity to the complex.

Functionally, essential for the control of the cell cycle at the G2/M (mitosis) transition. The chain is G2/mitotic-specific cyclin-B1 (ccnb1) from Carassius auratus (Goldfish).